The primary structure comprises 459 residues: Probable Delta(5) fatty acid desaturase C (459 aa).

A Cytochrome b5 heme-binding domain is found at 9 to 87; the sequence is KKLYSWKEIS…LKQYEIGQVS (79 aa). Heme-binding residues include histidine 45 and histidine 68. Helical transmembrane passes span 121–141 and 151–171; these read FAFG…TSYY and FYLN…FSLH. Positions 174–178 match the Histidine box-1 motif; it reads HDACH. The helical transmembrane segment at 187-207 threads the bilayer; the sequence is VWKWLGATYDLFIGASFFYWC. The Histidine box-2 motif lies at 210–215; it reads HVIGHH. Transmembrane regions (helical) follow at residues 289 to 309 and 315 to 335; these read FEII…FIIP and LVNL…YLSF. The Histidine box-3 motif lies at 394 to 398; that stretch reads QVVHH.

The protein belongs to the fatty acid desaturase type 1 family. It depends on Fe cation as a cofactor.

It is found in the membrane. In Dictyostelium discoideum (Social amoeba), this protein is Probable Delta(5) fatty acid desaturase C.